The chain runs to 582 residues: Semenogelin-2 (582 aa).

Positions 1 to 23 are cleaved as a signal peptide; the sequence is MKSIILFVLSLLLILEKQAAVMG. The disordered stretch occupies residues 24–59; the sequence is QKGGSKGQLPSGSSQFPHGQKGQHYFGQKDQQHTKS. A compositionally biased stretch (polar residues) spans 31-40; that stretch reads QLPSGSSQFP. 3 repeat units span residues 70–129, 141–200, and 201–260. The segment at 70–559 is repeat-rich region; that stretch reads HVDINDHDWT…SSESHNIVIT (490 aa). Disordered stretches follow at residues 132–160, 173–194, 228–248, and 269–582; these read GGQA…SQCS, KEQA…QSSY, EEHS…RLQH, and QTKN…PIST. 2 stretches are compositionally biased toward polar residues: residues 137–160 and 174–194; these read HGTQ…SQCS and EQAS…QSSY. Residues 261–500 form a 4 X 60 AA tandem repeats, type I region; the sequence is LVYNKNQHQT…QSSISFQIEK (240 aa). Asn-272 carries N-linked (GlcNAc...) asparagine glycosylation. Basic and acidic residues predominate over residues 292 to 310; it reads RTEERQLHHGEKSVQKDVS. Residues 325–334 show a composition bias toward polar residues; it reads KSQNQVTIHS. Residues 335–345 show a composition bias toward basic and acidic residues; it reads QDQEHGHKENK. Residues 372–397 show a composition bias toward polar residues; that stretch reads GSISIQTEEQIHGKSQNQVRIPSQAQ. A compositionally biased stretch (basic and acidic residues) spans 413–426; it reads TEERRLNSGEKDVQ. The segment covering 445–455 has biased composition (polar residues); that stretch reads KSQNQVTIPSQ. Basic and acidic residues predominate over residues 456–465; sequence DQEHGHKENK. 2 stretches are compositionally biased toward polar residues: residues 482–496 and 506–532; these read GKST…SISF and SQIQ…QSAD. A 3-2 repeat occupies 501–559; the sequence is LVEGKSQIQTPNPNQDQWSGQNAKGKSGQSADSKQDLLSHEQKGRYKQESSESHNIVIT. Composition is skewed to basic and acidic residues over residues 533–552 and 559–582; these read SKQD…ESSE and TEHE…PIST.

The protein belongs to the semenogelin family. Interacts with SERPINA5. Post-translationally, semenogelin-2 is thought to form both the 71 kDa polypeptide and, in its glycosylated form, the 76 kDa polypeptide. Seminal vesicles, and to a much lesser extent, epididymis.

It localises to the secreted. Functionally, participates in the formation of a gel matrix (sperm coagulum) entrapping the accessory gland secretions and ejaculated spermatozoa. In Homo sapiens (Human), this protein is Semenogelin-2 (SEMG2).